We begin with the raw amino-acid sequence, 560 residues long: 2-succinyl-5-enolpyruvyl-6-hydroxy-3-cyclohexene-1-carboxylate synthase (560 aa).

Belongs to the TPP enzyme family. MenD subfamily. As to quaternary structure, homodimer. Mg(2+) is required as a cofactor. The cofactor is Mn(2+). Thiamine diphosphate serves as cofactor.

The enzyme catalyses isochorismate + 2-oxoglutarate + H(+) = 5-enolpyruvoyl-6-hydroxy-2-succinyl-cyclohex-3-ene-1-carboxylate + CO2. It functions in the pathway quinol/quinone metabolism; 1,4-dihydroxy-2-naphthoate biosynthesis; 1,4-dihydroxy-2-naphthoate from chorismate: step 2/7. It participates in quinol/quinone metabolism; menaquinone biosynthesis. Functionally, catalyzes the thiamine diphosphate-dependent decarboxylation of 2-oxoglutarate and the subsequent addition of the resulting succinic semialdehyde-thiamine pyrophosphate anion to isochorismate to yield 2-succinyl-5-enolpyruvyl-6-hydroxy-3-cyclohexene-1-carboxylate (SEPHCHC). This Pectobacterium atrosepticum (strain SCRI 1043 / ATCC BAA-672) (Erwinia carotovora subsp. atroseptica) protein is 2-succinyl-5-enolpyruvyl-6-hydroxy-3-cyclohexene-1-carboxylate synthase.